A 364-amino-acid chain; its full sequence is tRNA N6-adenosine threonylcarbamoyltransferase (364 aa).

His-118 and His-122 together coordinate Fe cation. Substrate is bound by residues 140-144, Asp-173, Gly-186, and Asn-288; that span reads LVSGG. Residue Asp-316 coordinates Fe cation.

Belongs to the KAE1 / TsaD family. The cofactor is Fe(2+).

It localises to the cytoplasm. The catalysed reaction is L-threonylcarbamoyladenylate + adenosine(37) in tRNA = N(6)-L-threonylcarbamoyladenosine(37) in tRNA + AMP + H(+). Required for the formation of a threonylcarbamoyl group on adenosine at position 37 (t(6)A37) in tRNAs that read codons beginning with adenine. Is involved in the transfer of the threonylcarbamoyl moiety of threonylcarbamoyl-AMP (TC-AMP) to the N6 group of A37, together with TsaE and TsaB. TsaD likely plays a direct catalytic role in this reaction. This Cereibacter sphaeroides (strain ATCC 17023 / DSM 158 / JCM 6121 / CCUG 31486 / LMG 2827 / NBRC 12203 / NCIMB 8253 / ATH 2.4.1.) (Rhodobacter sphaeroides) protein is tRNA N6-adenosine threonylcarbamoyltransferase.